A 429-amino-acid polypeptide reads, in one-letter code: Formate-dependent phosphoribosylglycinamide formyltransferase (429 aa).

N(1)-(5-phospho-beta-D-ribosyl)glycinamide contacts are provided by residues glutamate 26–leucine 27 and glutamate 86. Residues arginine 118, lysine 159, glutamate 199 to isoleucine 202, and glutamate 207 contribute to the ATP site. The 197-residue stretch at glutamate 123 to leucine 319 folds into the ATP-grasp domain. Glutamate 276 and glutamate 288 together coordinate Mg(2+). N(1)-(5-phospho-beta-D-ribosyl)glycinamide-binding positions include aspartate 295, lysine 375, and arginine 382–arginine 383.

This sequence belongs to the PurK/PurT family. As to quaternary structure, homodimer.

It catalyses the reaction N(1)-(5-phospho-beta-D-ribosyl)glycinamide + formate + ATP = N(2)-formyl-N(1)-(5-phospho-beta-D-ribosyl)glycinamide + ADP + phosphate + H(+). It functions in the pathway purine metabolism; IMP biosynthesis via de novo pathway; N(2)-formyl-N(1)-(5-phospho-D-ribosyl)glycinamide from N(1)-(5-phospho-D-ribosyl)glycinamide (formate route): step 1/1. In terms of biological role, involved in the de novo purine biosynthesis. Catalyzes the transfer of formate to 5-phospho-ribosyl-glycinamide (GAR), producing 5-phospho-ribosyl-N-formylglycinamide (FGAR). Formate is provided by PurU via hydrolysis of 10-formyl-tetrahydrofolate. In Thermococcus kodakarensis (strain ATCC BAA-918 / JCM 12380 / KOD1) (Pyrococcus kodakaraensis (strain KOD1)), this protein is Formate-dependent phosphoribosylglycinamide formyltransferase.